Here is a 1407-residue protein sequence, read N- to C-terminus: Clustered mitochondria protein (1407 aa).

A compositionally biased stretch (basic residues) spans 1-12 (MAGKSNKSKAKR). Disordered stretches follow at residues 1 to 36 (MAGK…PVAA) and 83 to 103 (IPKA…PKQG). A compositionally biased stretch (polar residues) spans 14 to 24 (AQSTTTNSTTD). Residues 384–670 (PDHKRDAARA…RVTPRDANYT (287 aa)) form the Clu domain. A disordered region spans residues 724-760 (IDGEANGASNSDQKSISDKQNTTAEDYAAGSSESSKS). Positions 730-747 (GASNSDQKSISDKQNTTA) are enriched in polar residues. 5 TPR repeats span residues 1025–1058 (AKDL…LQQV), 1067–1100 (ANCC…NERC), 1109–1142 (AHSY…LGLS), 1151–1184 (AATF…NERL), and 1193–1226 (AVCY…LVKQ). The segment at 1358–1407 (VSSEKGGENGEAKVQEKKESSENGKTENLAPAGLGAGLTSLDKKKQKAKK) is disordered. Residues 1362-1382 (KGGENGEAKVQEKKESSENGK) are compositionally biased toward basic and acidic residues.

Belongs to the CLU family.

The protein resides in the cytoplasm. In terms of biological role, mRNA-binding protein involved in proper cytoplasmic distribution of mitochondria. Together with REC2, REC3 and FMT/CLU, contributes to the establishment of the cellular volume devoted to the chloroplast compartment. This is Clustered mitochondria protein from Arabidopsis thaliana (Mouse-ear cress).